The sequence spans 424 residues: GTPase Obg (424 aa).

In terms of domain architecture, Obg spans 1–160 (MFDRVEINIK…YDLILELKLI (160 aa)). The 168-residue stretch at 161 to 328 (ADVAIIGYPN…LLAKVAEKLD (168 aa)) folds into the OBG-type G domain. Residues 167 to 174 (GYPNVGKS), 192 to 196 (FTTLS), 213 to 216 (EVPG), 280 to 283 (NKID), and 309 to 311 (SAL) contribute to the GTP site. Residues Ser-174 and Thr-194 each coordinate Mg(2+). The OCT domain maps to 349 to 424 (PAPKGKMGFR…IITGRMEWYL (76 aa)).

Belongs to the TRAFAC class OBG-HflX-like GTPase superfamily. OBG GTPase family. In terms of assembly, monomer. Requires Mg(2+) as cofactor.

Its subcellular location is the cytoplasm. An essential GTPase which binds GTP, GDP and possibly (p)ppGpp with moderate affinity, with high nucleotide exchange rates and a fairly low GTP hydrolysis rate. Plays a role in control of the cell cycle, stress response, ribosome biogenesis and in those bacteria that undergo differentiation, in morphogenesis control. The chain is GTPase Obg from Dehalococcoides mccartyi (strain ATCC BAA-2100 / JCM 16839 / KCTC 5957 / BAV1).